Reading from the N-terminus, the 178-residue chain is ATP synthase subunit delta (178 aa).

It belongs to the ATPase delta chain family. F-type ATPases have 2 components, F(1) - the catalytic core - and F(0) - the membrane proton channel. F(1) has five subunits: alpha(3), beta(3), gamma(1), delta(1), epsilon(1). F(0) has three main subunits: a(1), b(2) and c(10-14). The alpha and beta chains form an alternating ring which encloses part of the gamma chain. F(1) is attached to F(0) by a central stalk formed by the gamma and epsilon chains, while a peripheral stalk is formed by the delta and b chains.

The protein localises to the cell membrane. Its function is as follows. F(1)F(0) ATP synthase produces ATP from ADP in the presence of a proton or sodium gradient. F-type ATPases consist of two structural domains, F(1) containing the extramembraneous catalytic core and F(0) containing the membrane proton channel, linked together by a central stalk and a peripheral stalk. During catalysis, ATP synthesis in the catalytic domain of F(1) is coupled via a rotary mechanism of the central stalk subunits to proton translocation. This protein is part of the stalk that links CF(0) to CF(1). It either transmits conformational changes from CF(0) to CF(1) or is implicated in proton conduction. The sequence is that of ATP synthase subunit delta from Streptococcus pyogenes serotype M2 (strain MGAS10270).